A 349-amino-acid polypeptide reads, in one-letter code: N-lysine methyltransferase KMT5A (349 aa).

Residues Ala-18 to Phe-46 form a disordered region. At Ser-57 the chain carries Phosphoserine. Residues Arg-65–Ile-207 are disordered. The span at Val-107–Arg-119 shows a compositional bias: basic and acidic residues. Thr-138 carries the phosphothreonine modification. The segment covering Ala-154 to Gln-170 has biased composition (basic residues). Basic and acidic residues predominate over residues Ser-192 to Ile-207. The SET domain maps to Glu-213–Gly-334. S-adenosyl-L-methionine is bound by residues Lys-223–Arg-225, Tyr-268, and Asn-295–His-296.

This sequence belongs to the class V-like SAM-binding methyltransferase superfamily. Histone-lysine methyltransferase family. PR/SET subfamily. Interacts with L3MBTL1. Interacts with SIRT2 (phosphorylated form); the interaction is direct, stimulates KMT5A-mediated methyltransferase activity at histone H4 'Lys-20' (H4K20me1) and is increased in a H(2)O(2)-induced oxidative stress-dependent manner. Ubiquitinated and degraded by the DCX(DTL) complex.

It is found in the nucleus. The protein resides in the chromosome. The catalysed reaction is L-lysyl(20)-[histone H4] + S-adenosyl-L-methionine = N(6)-methyl-L-lysyl(20)-[histone H4] + S-adenosyl-L-homocysteine + H(+). It carries out the reaction L-lysyl-[protein] + S-adenosyl-L-methionine = N(6)-methyl-L-lysyl-[protein] + S-adenosyl-L-homocysteine + H(+). Functionally, protein-lysine N-methyltransferase that monomethylates both histones and non-histone proteins. Specifically monomethylates 'Lys-20' of histone H4 (H4K20me1). H4K20me1 is enriched during mitosis and represents a specific tag for epigenetic transcriptional repression. Mainly functions in euchromatin regions, thereby playing a central role in the silencing of euchromatic genes. Required for cell proliferation, probably by contributing to the maintenance of proper higher-order structure of DNA during mitosis. Involved in chromosome condensation and proper cytokinesis. Nucleosomes are preferred as substrate compared to free histones. Mediates monomethylation of p53/TP53 at 'Lys-382', leading to repress p53/TP53-target genes. Plays a negative role in TGF-beta response regulation and a positive role in cell migration. The polypeptide is N-lysine methyltransferase KMT5A (Mus musculus (Mouse)).